A 365-amino-acid chain; its full sequence is UDP-N-acetylglucosamine--N-acetylmuramyl-(pentapeptide) pyrophosphoryl-undecaprenol N-acetylglucosamine transferase (365 aa).

UDP-N-acetyl-alpha-D-glucosamine contacts are provided by residues 10 to 12, Asn-124, Arg-165, Ser-193, Ile-248, and Gln-293; that span reads TGG.

Belongs to the glycosyltransferase 28 family. MurG subfamily.

It localises to the cell inner membrane. The catalysed reaction is di-trans,octa-cis-undecaprenyl diphospho-N-acetyl-alpha-D-muramoyl-L-alanyl-D-glutamyl-meso-2,6-diaminopimeloyl-D-alanyl-D-alanine + UDP-N-acetyl-alpha-D-glucosamine = di-trans,octa-cis-undecaprenyl diphospho-[N-acetyl-alpha-D-glucosaminyl-(1-&gt;4)]-N-acetyl-alpha-D-muramoyl-L-alanyl-D-glutamyl-meso-2,6-diaminopimeloyl-D-alanyl-D-alanine + UDP + H(+). It functions in the pathway cell wall biogenesis; peptidoglycan biosynthesis. Functionally, cell wall formation. Catalyzes the transfer of a GlcNAc subunit on undecaprenyl-pyrophosphoryl-MurNAc-pentapeptide (lipid intermediate I) to form undecaprenyl-pyrophosphoryl-MurNAc-(pentapeptide)GlcNAc (lipid intermediate II). The chain is UDP-N-acetylglucosamine--N-acetylmuramyl-(pentapeptide) pyrophosphoryl-undecaprenol N-acetylglucosamine transferase from Geotalea uraniireducens (strain Rf4) (Geobacter uraniireducens).